The sequence spans 184 residues: Lipid A acyltransferase PagP (184 aa).

A signal peptide spans 1–22 (MNIRHGIIAMSSTMLVPLAAEA). Residues His-57, Asp-100, and Ser-101 contribute to the active site.

The protein belongs to the lipid A palmitoyltransferase family. In terms of assembly, homodimer.

Its subcellular location is the cell outer membrane. It carries out the reaction a lipid A + a 1,2-diacyl-sn-glycero-3-phosphocholine = a hepta-acyl lipid A + a 2-acyl-sn-glycero-3-phosphocholine. The enzyme catalyses a lipid IVA + a 1,2-diacyl-sn-glycero-3-phosphocholine = a lipid IVB + a 2-acyl-sn-glycero-3-phosphocholine. The catalysed reaction is a lipid IIA + a 1,2-diacyl-sn-glycero-3-phosphocholine = a lipid IIB + a 2-acyl-sn-glycero-3-phosphocholine. In terms of biological role, transfers a fatty acid residue from the sn-1 position of a phospholipid to the N-linked hydroxyfatty acid chain on the proximal unit of lipid A or its precursors. This Methylobacillus flagellatus (strain ATCC 51484 / DSM 6875 / VKM B-1610 / KT) protein is Lipid A acyltransferase PagP.